Here is a 574-residue protein sequence, read N- to C-terminus: Kelch-like protein 18 (574 aa).

The BTB domain occupies 66–105 (MFTNDMMECKQDEIVMQGMDPSALEALINFAYNGNLAIDQ). The BACK domain maps to 140–242 (CLGVRQFAET…RPQFLSDRVQ (103 aa)). Kelch repeat units follow at residues 289 to 336 (LIYA…VVNG), 337 to 383 (LLYA…VLDG), 384 to 430 (QIYV…VFEG), 432 to 477 (IYVS…SLGS), 479 to 524 (MFVC…ASCG), and 525 to 571 (RLYA…CIPL).

As to quaternary structure, interacts with AURKA. Interacts (via BTB domain) with CUL3. Interacts (via kelch repeats) with UNC119.

It participates in protein modification; protein ubiquitination. In terms of biological role, substrate-specific adapter of a BCR (BTB-CUL3-RBX1) E3 ubiquitin-protein ligase complex required for mitotic progression and cytokinesis. The BCR(KLHL18) E3 ubiquitin ligase complex mediates the ubiquitination of AURKA leading to its activation at the centrosome which is required for initiating mitotic entry. Regulates light-and dark-dependent alpha-transducin localization changes in rod photoreceptors through UNC119 ubiquitination and degradation. Preferentially ubiquitinates the unphosphorylated form of UNC119 over the phosphorylated form. In the presence of UNC119, under dark-adapted conditions alpha-transducin mislocalizes from the outer segment to the inner part of rod photoreceptors which leads to decreased photoreceptor damage caused by light. The protein is Kelch-like protein 18 (KLHL18) of Homo sapiens (Human).